We begin with the raw amino-acid sequence, 491 residues long: Cytosol aminopeptidase (491 aa).

Residues K263 and D268 each contribute to the Mn(2+) site. The active site involves K275. Mn(2+) contacts are provided by D286, D345, and E347. R349 is a catalytic residue.

It belongs to the peptidase M17 family. The cofactor is Mn(2+).

Its subcellular location is the cytoplasm. The catalysed reaction is Release of an N-terminal amino acid, Xaa-|-Yaa-, in which Xaa is preferably Leu, but may be other amino acids including Pro although not Arg or Lys, and Yaa may be Pro. Amino acid amides and methyl esters are also readily hydrolyzed, but rates on arylamides are exceedingly low.. It carries out the reaction Release of an N-terminal amino acid, preferentially leucine, but not glutamic or aspartic acids.. Its function is as follows. Presumably involved in the processing and regular turnover of intracellular proteins. Catalyzes the removal of unsubstituted N-terminal amino acids from various peptides. This is Cytosol aminopeptidase (pepA) from Haemophilus influenzae (strain ATCC 51907 / DSM 11121 / KW20 / Rd).